We begin with the raw amino-acid sequence, 315 residues long: DNA-directed RNA polymerase subunit alpha (315 aa).

Positions 1–229 (MLDSKLKAPV…EHLTYFSNPQ (229 aa)) are alpha N-terminal domain (alpha-NTD). Positions 247 to 315 (EQEEELDLPL…LEKKGFTLKE (69 aa)) are alpha C-terminal domain (alpha-CTD).

This sequence belongs to the RNA polymerase alpha chain family. As to quaternary structure, homodimer. The RNAP catalytic core consists of 2 alpha, 1 beta, 1 beta' and 1 omega subunit. When a sigma factor is associated with the core the holoenzyme is formed, which can initiate transcription.

It carries out the reaction RNA(n) + a ribonucleoside 5'-triphosphate = RNA(n+1) + diphosphate. Functionally, DNA-dependent RNA polymerase catalyzes the transcription of DNA into RNA using the four ribonucleoside triphosphates as substrates. The chain is DNA-directed RNA polymerase subunit alpha from Thermus thermophilus (strain ATCC BAA-163 / DSM 7039 / HB27).